A 189-amino-acid chain; its full sequence is dCTP deaminase (189 aa).

Residues 112-117, 136-138, Q157, Y171, and Q181 each bind dCTP; these read KSTYAR and TLE. E138 functions as the Proton donor/acceptor in the catalytic mechanism.

This sequence belongs to the dCTP deaminase family. Homotrimer.

It carries out the reaction dCTP + H2O + H(+) = dUTP + NH4(+). It functions in the pathway pyrimidine metabolism; dUMP biosynthesis; dUMP from dCTP (dUTP route): step 1/2. Its function is as follows. Catalyzes the deamination of dCTP to dUTP. This chain is dCTP deaminase, found in Halorhodospira halophila (strain DSM 244 / SL1) (Ectothiorhodospira halophila (strain DSM 244 / SL1)).